A 135-amino-acid chain; its full sequence is Large ribosomal subunit protein uL16c (135 aa).

The protein belongs to the universal ribosomal protein uL16 family. Part of the 50S ribosomal subunit.

It localises to the plastid. The protein resides in the chloroplast. The sequence is that of Large ribosomal subunit protein uL16c from Phaseolus vulgaris (Kidney bean).